A 473-amino-acid polypeptide reads, in one-letter code: 3-isopropylmalate dehydratase large subunit (473 aa).

3 residues coordinate [4Fe-4S] cluster: cysteine 351, cysteine 414, and cysteine 417.

It belongs to the aconitase/IPM isomerase family. LeuC type 1 subfamily. In terms of assembly, heterodimer of LeuC and LeuD. It depends on [4Fe-4S] cluster as a cofactor.

The catalysed reaction is (2R,3S)-3-isopropylmalate = (2S)-2-isopropylmalate. It participates in amino-acid biosynthesis; L-leucine biosynthesis; L-leucine from 3-methyl-2-oxobutanoate: step 2/4. In terms of biological role, catalyzes the isomerization between 2-isopropylmalate and 3-isopropylmalate, via the formation of 2-isopropylmaleate. The protein is 3-isopropylmalate dehydratase large subunit of Polaromonas sp. (strain JS666 / ATCC BAA-500).